The sequence spans 215 residues: MEEGPAVGTLSREVSTEEAEPLGAAWSGDSGHVSQSHSSASGPWDDDGPEDAPGRDLPLLRRAASGYASSLLPSAGPRPEVEALDASLEELLAKVDEFVGMLDMIRGDSSHVVGEGVPRIHAKAAEMRRIYGRIDKLEAFVRMIGSSVARMEEQVAKAEAELGTFPRAFRRLLHTISVPALFRSAPSGPQRAAYEPPVLFRTEDHFPGCGDRPQL.

The disordered stretch occupies residues 1–57; that stretch reads MEEGPAVGTLSREVSTEEAEPLGAAWSGDSGHVSQSHSSASGPWDDDGPEDAPGRDL. Residues 27-42 show a composition bias toward low complexity; that stretch reads SGDSGHVSQSHSSASG. Coiled-coil stretches lie at residues 80 to 97 and 134 to 165; these read EVEA…KVDE and IDKL…LGTF. Thr-164 carries the phosphothreonine modification.

Belongs to the BLOC1S4 family. As to quaternary structure, octamer composed of one copy each BLOC1S1, BLOC1S2, BLOC1S3, BLOC1S4, BLOC1S5, BLOC1S6, DTNBP1/BLOC1S7 and SNAPIN/BLOC1S8. Component of the biogenesis of lysosome-related organelles complex 1 (BLOC-1) composed of BLOC1S1, BLOC1S2, BLOC1S3, BLOC1S4, BLOC1S5, BLOC1S6, DTNBP1/BLOC1S7 and SNAPIN/BLOC1S8. The BLOC-1 complex associates with the AP-3 protein complex and membrane protein cargos. Interacts with BLOC1S5 and BLOC1S6. As to expression, widely expressed.

It is found in the cytoplasm. Functionally, component of the BLOC-1 complex, a complex that is required for normal biogenesis of lysosome-related organelles (LRO), such as platelet dense granules and melanosomes. In concert with the AP-3 complex, the BLOC-1 complex is required to target membrane protein cargos into vesicles assembled at cell bodies for delivery into neurites and nerve terminals. The BLOC-1 complex, in association with SNARE proteins, is also proposed to be involved in neurite extension. Plays a role in intracellular vesicle trafficking. In Mus musculus (Mouse), this protein is Biogenesis of lysosome-related organelles complex 1 subunit 4 (Bloc1s4).